The following is a 60-amino-acid chain: Ixodegrin-Ip (60 aa).

Residues 1 to 21 (MNAAFIAALFILGALTLDAMA) form the signal peptide. The Cell attachment site motif lies at 49-51 (RGD).

Belongs to the ixodegrin family. Contains 3 disulfide bonds. Expressed in salivary glands.

Its subcellular location is the secreted. Tick salivary platelet aggregation inhibitor that plays an important part in the anti-hemostatic strategy of ticks. Inhibits platelet aggregation induced by ADP, thrombin and thromboxane A2 (TXA2). Blocks platelet adhesion to soluble collagen (most probably through the binding to alpha-2/beta-1 integrin (ITGA2/ITGB1)) and binds to purified glycoprotein IIb/IIIa (ITGA2B/ITGB3) in a dose-dependent manner. In vivo, reduces thrombus weight effectively in a rat arteriovenous shunt model and inhibits thrombosis in a carrageenan-induced mouse tail thrombosis model. The protein is Ixodegrin-Ip of Ixodes pacificus (Western black-legged tick).